The primary structure comprises 487 residues: NADH-quinone oxidoreductase subunit N (487 aa).

The next 14 membrane-spanning stretches (helical) occupy residues 16–36 (VIMP…VNVF), 45–65 (LAWL…TGWG), 79–99 (NFAI…VLIS), 111–131 (GELY…AAAT), 133–153 (LMTI…LAGF), 168–188 (FLLG…IYGV), 212–232 (LLIG…AAPF), 257–276 (AAGF…AMIA), 281–298 (LLWI…FTAL), 306–326 (MLAY…ASGT), 333–353 (ILFY…VIVL), 378–398 (ALAM…AGFI), 413–435 (IWLA…RVIV), and 457–477 (LALV…SMIL).

The protein belongs to the complex I subunit 2 family. NDH-1 is composed of 14 different subunits. Subunits NuoA, H, J, K, L, M, N constitute the membrane sector of the complex.

Its subcellular location is the cell inner membrane. The enzyme catalyses a quinone + NADH + 5 H(+)(in) = a quinol + NAD(+) + 4 H(+)(out). NDH-1 shuttles electrons from NADH, via FMN and iron-sulfur (Fe-S) centers, to quinones in the respiratory chain. The immediate electron acceptor for the enzyme in this species is believed to be ubiquinone. Couples the redox reaction to proton translocation (for every two electrons transferred, four hydrogen ions are translocated across the cytoplasmic membrane), and thus conserves the redox energy in a proton gradient. This chain is NADH-quinone oxidoreductase subunit N, found in Trichlorobacter lovleyi (strain ATCC BAA-1151 / DSM 17278 / SZ) (Geobacter lovleyi).